Consider the following 247-residue polypeptide: Probable transcriptional regulatory protein EUBELI_00902 (247 aa).

It belongs to the TACO1 family.

It is found in the cytoplasm. The sequence is that of Probable transcriptional regulatory protein EUBELI_00902 from Lachnospira eligens (strain ATCC 27750 / DSM 3376 / VPI C15-48 / C15-B4) (Eubacterium eligens).